We begin with the raw amino-acid sequence, 143 residues long: Large ribosomal subunit protein uL11 (143 aa).

This sequence belongs to the universal ribosomal protein uL11 family. As to quaternary structure, part of the ribosomal stalk of the 50S ribosomal subunit. Interacts with L10 and the large rRNA to form the base of the stalk. L10 forms an elongated spine to which L12 dimers bind in a sequential fashion forming a multimeric L10(L12)X complex. In terms of processing, one or more lysine residues are methylated.

Functionally, forms part of the ribosomal stalk which helps the ribosome interact with GTP-bound translation factors. This Paracidovorax citrulli (strain AAC00-1) (Acidovorax citrulli) protein is Large ribosomal subunit protein uL11.